We begin with the raw amino-acid sequence, 257 residues long: Dihydroorotate dehydrogenase B (NAD(+)), electron transfer subunit (257 aa).

In terms of domain architecture, FAD-binding FR-type spans 2 to 100 (ILIEDLTVVS…MGPQGNGFDI (99 aa)). FAD-binding positions include 51–54 (RPIS), 68–70 (VYR), and 75–76 (GT). The [2Fe-2S] cluster site is built by C220, C225, C228, and C244.

It belongs to the PyrK family. As to quaternary structure, heterotetramer of 2 PyrK and 2 PyrD type B subunits. Requires [2Fe-2S] cluster as cofactor. FAD serves as cofactor.

Its pathway is pyrimidine metabolism; UMP biosynthesis via de novo pathway; orotate from (S)-dihydroorotate (NAD(+) route): step 1/1. In terms of biological role, responsible for channeling the electrons from the oxidation of dihydroorotate from the FMN redox center in the PyrD type B subunit to the ultimate electron acceptor NAD(+). The sequence is that of Dihydroorotate dehydrogenase B (NAD(+)), electron transfer subunit from Streptococcus thermophilus (strain ATCC BAA-491 / LMD-9).